The chain runs to 638 residues: Adhesion G-protein coupled receptor F2 (638 aa).

The N-terminal stretch at 1–25 (MISARWLYCLVLLLATESCRLFCQA) is a signal peptide. Topologically, residues 26-386 (ASKSKENVMP…ESPVLTYITY (361 aa)) are extracellular. N-linked (GlcNAc...) asparagine glycosylation is found at Asn-155, Asn-219, Asn-248, Asn-293, and Asn-311. The GAIN-B domain occupies 233 to 377 (PRNSLGKNFT…SILMSPNTVE (145 aa)). Cystine bridges form between Cys-329–Cys-356 and Cys-344–Cys-358. The segment at 329 to 377 (CVGWHSLESRWDRRACKMIQENSRQAICRCQPNKFFTSFSILMSPNTVE) is GPS. A helical transmembrane segment spans residues 387–407 (IGLGISICSLIICLAIEALVW). Topologically, residues 408–422 (SQVTKTEISYLRHLC) are cytoplasmic. Residues 423 to 443 (IANIAVTLLMADVWFIVASFL) traverse the membrane as a helical segment. Residues 444 to 465 (SGPIVHHNGCVTATFFVHFFYL) lie on the Extracellular side of the membrane. A helical transmembrane segment spans residues 466 to 486 (SVFFWMLAKALLILYGILIVF). Residues 487–493 (HTLPKSC) are Cytoplasmic-facing. The helical transmembrane segment at 494 to 514 (LVASLFTVGYGCPLVIAVITL) threads the bilayer. The Extracellular segment spans residues 515 to 541 (AVTEPGKGYLRPEACWLNWDMTKALLA). The chain crosses the membrane as a helical span at residues 542 to 562 (FVVPALAIVVVNLITVTLVII). Over 563 to 586 (KTQRAAVGSSMFQEVRAIVRICKN) the chain is Cytoplasmic. The helical transmembrane segment at 587 to 607 (IAILTPLLGLTWGFGIATVVA) threads the bilayer. At 608 to 610 (GHS) the chain is on the extracellular side. A helical transmembrane segment spans residues 611-631 (LAFHIIFSLLNALQVSPDAMI). Topologically, residues 632 to 638 (ESEWRGC) are cytoplasmic.

The protein belongs to the G-protein coupled receptor 2 family. Adhesion G-protein coupled receptor (ADGR) subfamily.

Its subcellular location is the membrane. Orphan receptor. The polypeptide is Adhesion G-protein coupled receptor F2 (Adgrf2) (Rattus norvegicus (Rat)).